Here is a 774-residue protein sequence, read N- to C-terminus: DNA ligase 3 (774 aa).

A disordered region spans residues 1–25; that stretch reads MPPKKRMKNGSSLKSTSKKGEKSRN. The active-site N6-AMP-lysine intermediate is the lysine 433.

It belongs to the ATP-dependent DNA ligase family.

It localises to the nucleus. The enzyme catalyses ATP + (deoxyribonucleotide)n-3'-hydroxyl + 5'-phospho-(deoxyribonucleotide)m = (deoxyribonucleotide)n+m + AMP + diphosphate.. The sequence is that of DNA ligase 3 (adl1) from Schizosaccharomyces pombe (strain 972 / ATCC 24843) (Fission yeast).